Here is a 431-residue protein sequence, read N- to C-terminus: Adenylosuccinate synthetase (431 aa).

GTP contacts are provided by residues 12–18 and 40–42; these read GDEGKGK and GHT. Aspartate 13 functions as the Proton acceptor in the catalytic mechanism. Mg(2+) contacts are provided by aspartate 13 and glycine 40. IMP-binding positions include 13–16, 38–41, threonine 131, arginine 145, glutamine 225, threonine 240, and arginine 304; these read DEGK and NAGH. Catalysis depends on histidine 41, which acts as the Proton donor. 300–306 contributes to the substrate binding site; that stretch reads TVTGRKR. Residues arginine 306, 332–334, and 414–416 contribute to the GTP site; these read KLD and STS.

Belongs to the adenylosuccinate synthetase family. As to quaternary structure, homodimer. It depends on Mg(2+) as a cofactor.

The protein localises to the cytoplasm. The catalysed reaction is IMP + L-aspartate + GTP = N(6)-(1,2-dicarboxyethyl)-AMP + GDP + phosphate + 2 H(+). It functions in the pathway purine metabolism; AMP biosynthesis via de novo pathway; AMP from IMP: step 1/2. Plays an important role in the de novo pathway of purine nucleotide biosynthesis. Catalyzes the first committed step in the biosynthesis of AMP from IMP. The chain is Adenylosuccinate synthetase from Roseobacter denitrificans (strain ATCC 33942 / OCh 114) (Erythrobacter sp. (strain OCh 114)).